A 118-amino-acid chain; its full sequence is Large ribosomal subunit protein bL20 (118 aa).

It belongs to the bacterial ribosomal protein bL20 family.

Binds directly to 23S ribosomal RNA and is necessary for the in vitro assembly process of the 50S ribosomal subunit. It is not involved in the protein synthesizing functions of that subunit. The chain is Large ribosomal subunit protein bL20 from Pseudomonas entomophila (strain L48).